A 406-amino-acid chain; its full sequence is MSEREEFKFNTVEEAIEDIRQGKMVIVVDDPDRENEGDLVMAAEKVTPEAINFMAKYGRGLICLSLTPERCEQLDLHPMTPMNTDPKGTYFCVSIDAHPKHGTTTGISAYDRALTIKLAISPDAKPSDFVRPGHVFPLKARPGGVLERAGHTEASVDLARLAGLYPAGVICEIMKDDGTMARVPDLMEFAKKHNLKIITIADLIKYRLRRETLVEKVASAHLPTPWGVFKIHAYRHKLTGEEQVALTMGEWKEDEPVLVRVHSECLTGDVFRSFRCDCRPQLEKALEMIAKEGKGVLVYILGHEGRGIGIANKIKAYELQEKGYDTVEANEKLGYPPDLRDYGIGAQILRDLGVRKMKLMTNNPRKIVALEGFGLEVVERVPIKIEPNPYNKIYLQVKKDKLGHMF.

Residues 1–209 (MSEREEFKFN…IADLIKYRLR (209 aa)) form a DHBP synthase region. D-ribulose 5-phosphate contacts are provided by residues 33–34 (RE), D38, 148–152 (RAGHT), and E172. E34 contributes to the Mg(2+) binding site. Position 151 (H151) interacts with Mg(2+). Residues 210–406 (RETLVEKVAS…VKKDKLGHMF (197 aa)) are GTP cyclohydrolase II. 260 to 264 (RVHSE) is a binding site for GTP. 3 residues coordinate Zn(2+): C265, C276, and C278. Residues Q281, 304 to 306 (EGR), and T326 each bind GTP. D338 functions as the Proton acceptor; for GTP cyclohydrolase activity in the catalytic mechanism. The active-site Nucleophile; for GTP cyclohydrolase activity is R340. GTP-binding residues include T361 and K366.

It in the N-terminal section; belongs to the DHBP synthase family. The protein in the C-terminal section; belongs to the GTP cyclohydrolase II family. Requires Mg(2+) as cofactor. The cofactor is Mn(2+). It depends on Zn(2+) as a cofactor.

It catalyses the reaction D-ribulose 5-phosphate = (2S)-2-hydroxy-3-oxobutyl phosphate + formate + H(+). The catalysed reaction is GTP + 4 H2O = 2,5-diamino-6-hydroxy-4-(5-phosphoribosylamino)-pyrimidine + formate + 2 phosphate + 3 H(+). It participates in cofactor biosynthesis; riboflavin biosynthesis; 2-hydroxy-3-oxobutyl phosphate from D-ribulose 5-phosphate: step 1/1. Its pathway is cofactor biosynthesis; riboflavin biosynthesis; 5-amino-6-(D-ribitylamino)uracil from GTP: step 1/4. Catalyzes the conversion of D-ribulose 5-phosphate to formate and 3,4-dihydroxy-2-butanone 4-phosphate. Functionally, catalyzes the conversion of GTP to 2,5-diamino-6-ribosylamino-4(3H)-pyrimidinone 5'-phosphate (DARP), formate and pyrophosphate. In Aquifex aeolicus (strain VF5), this protein is Riboflavin biosynthesis protein RibBA.